The chain runs to 35 residues: Cytochrome b6-f complex subunit 5 (35 aa).

A helical transmembrane segment spans residues 5–25 (LLCGIVLGLIPVTLTGLFVAA).

It belongs to the PetG family. The 4 large subunits of the cytochrome b6-f complex are cytochrome b6, subunit IV (17 kDa polypeptide, PetD), cytochrome f and the Rieske protein, while the 4 small subunits are PetG, PetL, PetM and PetN. The complex functions as a dimer.

It is found in the plastid. It localises to the organellar chromatophore thylakoid membrane. Its function is as follows. Component of the cytochrome b6-f complex, which mediates electron transfer between photosystem II (PSII) and photosystem I (PSI), cyclic electron flow around PSI, and state transitions. PetG is required for either the stability or assembly of the cytochrome b6-f complex. The polypeptide is Cytochrome b6-f complex subunit 5 (Paulinella chromatophora).